The sequence spans 472 residues: Methanethiol oxidase (472 aa).

Belongs to the selenium-binding protein family.

It localises to the nucleus. The protein resides in the cytoplasm. The protein localises to the cytosol. It is found in the membrane. It carries out the reaction methanethiol + O2 + H2O = hydrogen sulfide + formaldehyde + H2O2 + H(+). It functions in the pathway organosulfur degradation. Functionally, catalyzes the oxidation of methanethiol, an organosulfur compound known to be produced in substantial amounts by gut bacteria. Selenium-binding protein which may be involved in the sensing of reactive xenobiotics in the cytoplasm. May be involved in intra-Golgi protein transport. The polypeptide is Methanethiol oxidase (selenbp1) (Xenopus tropicalis (Western clawed frog)).